The sequence spans 361 residues: Holliday junction branch migration complex subunit RuvB (361 aa).

Residues 1 to 12 (MNWDETGPETDE) show a composition bias toward acidic residues. Residues 1–21 (MNWDETGPETDEPTGPVLDDR) are disordered. The segment at 13-199 (PTGPVLDDRL…FGFTGHMEFY (187 aa)) is large ATPase domain (RuvB-L). Residues Leu38, Arg39, Gly80, Lys83, Thr84, Thr85, 146 to 148 (EDF), Arg189, Tyr199, and Arg236 each bind ATP. Thr84 provides a ligand contact to Mg(2+). Residues 200 to 270 (APAELERVLH…IAMAALKVYE (71 aa)) form a small ATPAse domain (RuvB-S) region. The segment at 273–361 (ARGLDRLDRA…AKGQQGLFGA (89 aa)) is head domain (RuvB-H). The DNA site is built by Arg309, Arg328, and Arg333.

This sequence belongs to the RuvB family. Homohexamer. Forms an RuvA(8)-RuvB(12)-Holliday junction (HJ) complex. HJ DNA is sandwiched between 2 RuvA tetramers; dsDNA enters through RuvA and exits via RuvB. An RuvB hexamer assembles on each DNA strand where it exits the tetramer. Each RuvB hexamer is contacted by two RuvA subunits (via domain III) on 2 adjacent RuvB subunits; this complex drives branch migration. In the full resolvosome a probable DNA-RuvA(4)-RuvB(12)-RuvC(2) complex forms which resolves the HJ.

Its subcellular location is the cytoplasm. The enzyme catalyses ATP + H2O = ADP + phosphate + H(+). Functionally, the RuvA-RuvB-RuvC complex processes Holliday junction (HJ) DNA during genetic recombination and DNA repair, while the RuvA-RuvB complex plays an important role in the rescue of blocked DNA replication forks via replication fork reversal (RFR). RuvA specifically binds to HJ cruciform DNA, conferring on it an open structure. The RuvB hexamer acts as an ATP-dependent pump, pulling dsDNA into and through the RuvAB complex. RuvB forms 2 homohexamers on either side of HJ DNA bound by 1 or 2 RuvA tetramers; 4 subunits per hexamer contact DNA at a time. Coordinated motions by a converter formed by DNA-disengaged RuvB subunits stimulates ATP hydrolysis and nucleotide exchange. Immobilization of the converter enables RuvB to convert the ATP-contained energy into a lever motion, pulling 2 nucleotides of DNA out of the RuvA tetramer per ATP hydrolyzed, thus driving DNA branch migration. The RuvB motors rotate together with the DNA substrate, which together with the progressing nucleotide cycle form the mechanistic basis for DNA recombination by continuous HJ branch migration. Branch migration allows RuvC to scan DNA until it finds its consensus sequence, where it cleaves and resolves cruciform DNA. The polypeptide is Holliday junction branch migration complex subunit RuvB (Streptomyces griseus subsp. griseus (strain JCM 4626 / CBS 651.72 / NBRC 13350 / KCC S-0626 / ISP 5235)).